A 413-amino-acid chain; its full sequence is MKHQETTSQQYNFSIIKHGDISTPQGFTAGGMHIGLRANKKDFGWIYSSSLASSAAVYTLNQFKAAPLIVTEDTLQKSKGKLQALVVNSANANSCTGQQGIDDARQTQTWVAQQLQIPSEHVAVASTGVIGEYLPMDKIKTGTEHIKDTNFATPGAFNEAILTTDTCTKHIAVSLKIDGKTVTIGGSAKGSGMIHPNMATMLAFITTDASIESNTLHQLLKSSTDHTFNMITVDGDTSTNDMVLVMANHQVEHQILSQDHPQWETFVDAFNFVCTFLAKAIARDGEGATKLISVNVSGAKSISDARKIGKTIVSSNLVKSAIFGEDANFGRIITAIGYSGCEIDPKCTYVQLNQIPVVDKGMAVLFDEQAMSNTLTHEHVTIDVQLGLGNAAATAYGCDLSYDYVRINASYRT.

Substrate is bound by residues Thr-163, Lys-189, Thr-200, Glu-286, Asn-408, and Thr-413. Thr-200 (nucleophile) is an active-site residue.

It belongs to the ArgJ family. In terms of assembly, heterotetramer of two alpha and two beta chains.

It localises to the cytoplasm. The enzyme catalyses N(2)-acetyl-L-ornithine + L-glutamate = N-acetyl-L-glutamate + L-ornithine. The catalysed reaction is L-glutamate + acetyl-CoA = N-acetyl-L-glutamate + CoA + H(+). Its pathway is amino-acid biosynthesis; L-arginine biosynthesis; L-ornithine and N-acetyl-L-glutamate from L-glutamate and N(2)-acetyl-L-ornithine (cyclic): step 1/1. The protein operates within amino-acid biosynthesis; L-arginine biosynthesis; N(2)-acetyl-L-ornithine from L-glutamate: step 1/4. Functionally, catalyzes two activities which are involved in the cyclic version of arginine biosynthesis: the synthesis of N-acetylglutamate from glutamate and acetyl-CoA as the acetyl donor, and of ornithine by transacetylation between N(2)-acetylornithine and glutamate. The sequence is that of Arginine biosynthesis bifunctional protein ArgJ from Staphylococcus aureus (strain Mu50 / ATCC 700699).